The following is a 207-amino-acid chain: PITH domain-containing protein P35G2.02 (207 aa).

The PITH domain maps to 13-189; it reads EHPFESGPND…PVVTIYEATP (177 aa).

This sequence belongs to the PITHD1 family.

It is found in the cytoplasm. The protein localises to the nucleus. The sequence is that of PITH domain-containing protein P35G2.02 from Schizosaccharomyces pombe (strain 972 / ATCC 24843) (Fission yeast).